We begin with the raw amino-acid sequence, 492 residues long: Cytochrome P450 monooxygenase rdc4 (492 aa).

Heme is bound at residue Cys-435.

The protein belongs to the cytochrome P450 family. Requires heme as cofactor.

Its pathway is secondary metabolite biosynthesis. Cytochrome P450 monooxygenase; part of the gene cluster that mediates the biosynthesis of radicicol, a resorcylic acid lactone (RAL) that irreversibly inhibits the HSP90 molecular chaperone, an important target for cancer chemotherapy. The radicicol cluster encodes only two apparent post-PKS enzymes, a cytochrome P450 monooxygenase (rdc4) and a non-heme halogenase (rdc2) that could introduce the epoxide and the chlorine, respectively. If this cluster includes all the genes required for radicicol biosynthesis, the remaining structural features of radicicol are presumably generated by the PKSs rdc1 and rdc5. The C-2' ketone could arise if the R-PKS rdc5 and NR-PKS rdc1 each carry out four iterations, in contrast to the five iteration-three iteration split for the hypothemycin PKSs. The origin of the cis 5',6' double bond is not known. The radicicol R-PKS rdc5 ER domain may catalyze either double bond isomerization or reduction in the third iteration. The polypeptide is Cytochrome P450 monooxygenase rdc4 (Metacordyceps chlamydosporia (Nematophagous fungus)).